Here is a 289-residue protein sequence, read N- to C-terminus: Energy-coupling factor transporter ATP-binding protein EcfA2 (289 aa).

The ABC transporter domain maps to 3 to 246; it reads IRFKQVDFTY…TQWLKEKQLG (244 aa). 40–47 provides a ligand contact to ATP; it reads GHTGSGKS.

Belongs to the ABC transporter superfamily. Energy-coupling factor EcfA family. In terms of assembly, forms a stable energy-coupling factor (ECF) transporter complex composed of 2 membrane-embedded substrate-binding proteins (S component), 2 ATP-binding proteins (A component) and 2 transmembrane proteins (T component).

The protein localises to the cell membrane. Functionally, ATP-binding (A) component of a common energy-coupling factor (ECF) ABC-transporter complex. Unlike classic ABC transporters this ECF transporter provides the energy necessary to transport a number of different substrates. In Enterococcus faecalis (strain ATCC 700802 / V583), this protein is Energy-coupling factor transporter ATP-binding protein EcfA2.